Reading from the N-terminus, the 177-residue chain is Disulfide bond formation protein B (177 aa).

At 1–14 (MMVWNWIDRTPRRV) the chain is on the cytoplasmic side. Residues 15 to 31 (LALISLACVALLACGLY) form a helical membrane-spanning segment. The Periplasmic portion of the chain corresponds to 32–49 (LQHVVGLVPCPMCIVQRY). A disulfide bridge connects residues cysteine 41 and cysteine 44. The chain crosses the membrane as a helical span at residues 50-64 (ALIGLALLTGLASAR). Residues 65–70 (SAKGWW) are Cytoplasmic-facing. A helical membrane pass occupies residues 71-89 (LTLSALAALTAGFGATVAA). The Periplasmic portion of the chain corresponds to 90–145 (RQSWLQWYPPQSVSCGRDFYGMIESFPLSRAIPMILRGSGDCAAVDWSLLGGSIAN). A disulfide bridge links cysteine 104 with cysteine 131. The helical transmembrane segment at 146–164 (WSFLCFALLGLLLLALLAR) threads the bilayer. The Cytoplasmic segment spans residues 165–177 (GVRGARQRAPAPV).

The protein belongs to the DsbB family.

Its subcellular location is the cell inner membrane. Functionally, required for disulfide bond formation in some periplasmic proteins. Acts by oxidizing the DsbA protein. This is Disulfide bond formation protein B from Verminephrobacter eiseniae (strain EF01-2).